The primary structure comprises 278 residues: Ankyrin repeat and SOCS box protein 13 (278 aa).

ANK repeat units lie at residues 18 to 47 (VERTPVHEAAQRGESLQLQQLIDSGACVNQ), 51 to 80 (DSITPLHAASLQGQAQCVQLLLAAGAQVDA), 84 to 113 (DGSTPLCDACASGSIECVKLLLSYGAKVNP), 116 to 145 (YTASPLHEACMSGSSECVRLLIDVGANLEA), 149 to 178 (HFGTPLHVACAREHLDCVKVLLNAGANVNA), and 181 to 210 (LHETALHHAAKVKNVDLIEMLIEFGGNIYA). An SOCS box domain is found at 229–278 (AKCFEYYEKTPLSLSQLCRVSLRKATGVRGLEKVAKLNIPPRLIDYLSYN).

This sequence belongs to the ankyrin SOCS box (ASB) family.

The protein operates within protein modification; protein ubiquitination. Functionally, may be a substrate-recognition component of a SCF-like ECS (Elongin-Cullin-SOCS-box protein) E3 ubiquitin-protein ligase complex which mediates the ubiquitination and subsequent proteasomal degradation of target proteins. The sequence is that of Ankyrin repeat and SOCS box protein 13 (Asb13) from Mus musculus (Mouse).